A 496-amino-acid chain; its full sequence is Xylulose kinase (496 aa).

83–84 (MH) contributes to the substrate binding site. Asp-237 (proton acceptor) is an active-site residue.

It belongs to the FGGY kinase family.

It catalyses the reaction D-xylulose + ATP = D-xylulose 5-phosphate + ADP + H(+). Catalyzes the phosphorylation of D-xylulose to D-xylulose 5-phosphate. The sequence is that of Xylulose kinase from Staphylococcus epidermidis (strain ATCC 12228 / FDA PCI 1200).